Here is a 61-residue protein sequence, read N- to C-terminus: Small ribosomal subunit protein uS14 (61 aa).

Zn(2+) contacts are provided by cysteine 24, cysteine 27, cysteine 40, and cysteine 43.

It belongs to the universal ribosomal protein uS14 family. Zinc-binding uS14 subfamily. Part of the 30S ribosomal subunit. Contacts proteins S3 and S10. The cofactor is Zn(2+).

In terms of biological role, binds 16S rRNA, required for the assembly of 30S particles and may also be responsible for determining the conformation of the 16S rRNA at the A site. In Bacillus anthracis (strain A0248), this protein is Small ribosomal subunit protein uS14.